Reading from the N-terminus, the 305-residue chain is GS homeobox 2 (305 aa).

Disordered stretches follow at residues 115–151 (DAQFCPRVSHAHHHHHPPQHHHHHHQPQQPGSAAAAA) and 259–305 (KKEG…ISPL). The span at 123–140 (SHAHHHHHPPQHHHHHHQ) shows a compositional bias: basic residues. Positions 141–151 (PQQPGSAAAAA) are enriched in low complexity. A DNA-binding region (homeobox) is located at residues 203–262 (GKRMRTAFTSTQLLELEREFSSNMYLSRLRRIEIATYLNLSEKQVKIWFQNRRVKHKKEG).

Belongs to the Antp homeobox family.

The protein localises to the nucleus. Its function is as follows. Transcription factor that binds 5'-CNAATTAG-3' DNA sequence and regulates the expression of numerous genes including genes important for brain development. During telencephalic development, causes ventralization of pallial progenitors and, depending on the developmental stage, specifies different neuronal fates. At early stages, necessary and sufficient to correctly specify the ventral lateral ganglionic eminence (LGE) and its major derivatives, the striatal projection neurons. At later stages, may specify LGE progenitors toward dorsal LGE fates, including olfactory bulb interneurons. The polypeptide is GS homeobox 2 (Gsx2) (Mus musculus (Mouse)).